The chain runs to 110 residues: ATP-dependent Clp protease adapter protein ClpS 2 (110 aa).

The segment at 1-24 (MSNDENRSGSPTGPNTSVITKVKP) is disordered. Residues 8–19 (SGSPTGPNTSVI) are compositionally biased toward polar residues.

The protein belongs to the ClpS family. As to quaternary structure, binds to the N-terminal domain of the chaperone ClpA.

Its function is as follows. Involved in the modulation of the specificity of the ClpAP-mediated ATP-dependent protein degradation. The sequence is that of ATP-dependent Clp protease adapter protein ClpS 2 from Bradyrhizobium diazoefficiens (strain JCM 10833 / BCRC 13528 / IAM 13628 / NBRC 14792 / USDA 110).